Consider the following 772-residue polypeptide: MELKRLGVSWRFLMVLVLILQSLSALDFDPYRVLGVSRTASQADIKKAYKKLAREWHPDKNKDPGAEDRFIQISKAYEILSNEEKRTNYDHYGDAGENQGYQKQQREHRFRHFHENFYFDESFFHFPFNAERRDSGDEKYLLHFSHYVNEVLPESFKRPYLIKITSDWCFSCIHIEPVWKEVVQELEGLGVGIGVVHAGYERRLAHHLGAHSTPSILGVISGKITFFHNAVVHENLRQFVESLLPGNLVEKVTNKNYVRFLSGWQQENKPHALLFGQTPAVPLMYKLTAFAYKDYVSFGYVYVGLRGVEEMTRQYNVNLYTPTMLIFKEHINKPADVIQARGLKKQVIEDFIAQNKYLLASRLTSQRLFHELCPVKRSHRQRKYCVVLLTAETNKVSKPFEAFLSFALANTQDTVRFVHVYSNRQQEFASTLLPDMEAFQGKSGVSILERRNTAGRVVFKTLEDPWTGSESDKFVLLGYLDQLRKDPAFLSSEAVLPDLTDELAPVFFLRWLYSVSDYLSDFWESLLHSNWREMMPLLSLIFSALFILFGTVMVQAFSDSNEERESHPADKEEVPEKAGKTEPSFTKESSSKIPKKGFVEVTELTDVTYTSNLVRLRPGHMNVVLILSNSTKTSLLQKFALEVYTFTGSSSLHFSFLTLDKHREWLEYLLEFAQDAAPIPNQYDKHFMERDYTGYVLALNGHKKYFCLFKPLKTVDEETVASCDPDSSRGKPSCGLGPKPLKGKLSKLSLWMERLLEGSLQRFYIPSWPELD.

Positions 1 to 25 (MELKRLGVSWRFLMVLVLILQSLSA) are cleaved as a signal peptide. The Cytoplasmic portion of the chain corresponds to 26–533 (LDFDPYRVLG…ESLLHSNWRE (508 aa)). Residues 29–93 (DPYRVLGVSR…EKRTNYDHYG (65 aa)) form the J domain. In terms of domain architecture, Thioredoxin spans 119 to 245 (FDESFFHFPF…LRQFVESLLP (127 aa)). The chain crosses the membrane as a helical; Anchor for type IV membrane protein span at residues 534-554 (MMPLLSLIFSALFILFGTVMV). The Extracellular portion of the chain corresponds to 555 to 772 (QAFSDSNEER…FYIPSWPELD (218 aa)). Residues 560–591 (SNEERESHPADKEEVPEKAGKTEPSFTKESSS) form a disordered region. The segment covering 561–580 (NEERESHPADKEEVPEKAGK) has biased composition (basic and acidic residues). A glycan (N-linked (GlcNAc...) asparagine) is linked at N629.

The protein resides in the endoplasmic reticulum membrane. In terms of biological role, plays an important role in regulating the size of autophagosomes during the formation process. This is DnaJ homolog subfamily C member 16 (Dnajc16) from Mus musculus (Mouse).